The sequence spans 366 residues: Phenylalanine--tRNA ligase alpha subunit (366 aa).

Glu-259 lines the Mg(2+) pocket.

This sequence belongs to the class-II aminoacyl-tRNA synthetase family. Phe-tRNA synthetase alpha subunit type 1 subfamily. In terms of assembly, tetramer of two alpha and two beta subunits. The cofactor is Mg(2+).

It is found in the cytoplasm. It carries out the reaction tRNA(Phe) + L-phenylalanine + ATP = L-phenylalanyl-tRNA(Phe) + AMP + diphosphate + H(+). In Erythrobacter litoralis (strain HTCC2594), this protein is Phenylalanine--tRNA ligase alpha subunit.